Consider the following 94-residue polypeptide: Pyrimidine/purine nucleoside phosphorylase (94 aa).

It belongs to the nucleoside phosphorylase PpnP family.

It carries out the reaction a purine D-ribonucleoside + phosphate = a purine nucleobase + alpha-D-ribose 1-phosphate. It catalyses the reaction adenosine + phosphate = alpha-D-ribose 1-phosphate + adenine. The catalysed reaction is cytidine + phosphate = cytosine + alpha-D-ribose 1-phosphate. The enzyme catalyses guanosine + phosphate = alpha-D-ribose 1-phosphate + guanine. It carries out the reaction inosine + phosphate = alpha-D-ribose 1-phosphate + hypoxanthine. It catalyses the reaction thymidine + phosphate = 2-deoxy-alpha-D-ribose 1-phosphate + thymine. The catalysed reaction is uridine + phosphate = alpha-D-ribose 1-phosphate + uracil. The enzyme catalyses xanthosine + phosphate = alpha-D-ribose 1-phosphate + xanthine. In terms of biological role, catalyzes the phosphorolysis of diverse nucleosides, yielding D-ribose 1-phosphate and the respective free bases. Can use uridine, adenosine, guanosine, cytidine, thymidine, inosine and xanthosine as substrates. Also catalyzes the reverse reactions. The protein is Pyrimidine/purine nucleoside phosphorylase of Pseudomonas putida (strain GB-1).